Reading from the N-terminus, the 90-residue chain is Evasin P1128 (90 aa).

The first 18 residues, 1-18 (MFIALGIQLFVAVTYAAG), serve as a signal peptide directing secretion. 3 disulfide bridges follow: Cys29–Cys51, Cys33–Cys53, and Cys44–Cys64. The N-linked (GlcNAc...) asparagine glycan is linked to Asn32.

The protein resides in the secreted. Functionally, salivary chemokine-binding protein which binds to host chemokines CXCL1, CXCL2, CXCL3, CXCL5 and CXCL8. The chain is Evasin P1128 from Ixodes ricinus (Common tick).